Consider the following 783-residue polypeptide: FYN-binding protein 1 (783 aa).

Composition is skewed to polar residues over residues Met-1 to Ser-18 and Gly-25 to Ala-45. The tract at residues Met-1–Lys-502 is disordered. The residue at position 3 (Lys-3) is an N6-acetyllysine. Residues Ser-28 and Ser-46 each carry the phosphoserine modification. Basic and acidic residues predominate over residues Ser-69–Lys-79. Position 225 is a phosphoserine (Ser-225). 2 stretches are compositionally biased toward basic and acidic residues: residues Pro-240–Gly-252 and Asn-278–Ala-290. The residue at position 329 (Ser-329) is a Phosphoserine. Residues Lys-345 to Pro-363 are compositionally biased toward pro residues. Residues Pro-348 to Ala-448 are interaction with SKAP1. Over residues Thr-374–Tyr-387 the composition is skewed to polar residues. Residues Leu-392–Ile-424 show a composition bias toward pro residues. Residues Leu-451–Ile-465 show a composition bias toward acidic residues. A coiled-coil region spans residues Asp-456–Thr-507. Position 457 is a phosphoserine (Ser-457). An SH2-binding motif is present at residues Tyr-462 to Ile-465. The span at Glu-466–Lys-501 shows a compositional bias: basic and acidic residues. The Nuclear localization signal signature appears at Lys-469–Lys-505. An SH3 1 domain is found at Gln-511–Asp-572. A Phosphotyrosine modification is found at Tyr-571. A phosphoserine mark is found at Ser-573 and Ser-580. The short motif at Tyr-595–Val-598 is the SH2-binding; to LCP2 element. The interval Val-598–Glu-678 is disordered. Acidic residues-rich tracts occupy residues Pro-620 to Asp-635 and Met-646 to Thr-656. The SH2-binding; to FYN motif lies at Tyr-625 to Ile-628. Position 651 is a phosphotyrosine (Tyr-651). The short motif at Lys-674–Lys-700 is the Nuclear localization signal element. The SH3 2 domain occupies Lys-700–Gly-768.

As to quaternary structure, part of a complex consisting of SKAP2, FYB1 and PTPNS1. Part of a complex consisting of SKAP2, FYB1 and LILRB3. Part of a complex consisting of SKAP1, FYB1 and CLNK. Interacts with CLNK (via its SH2 domain); this interaction allows SKAP1 and FYB1 to recruit FYN to the complex, thus promoting the phosphorylation of CLNK by FYN. Interacts with FYN. Interacts with LCP2. Interacts with SKAP1. Interacts with SKAP2. Interacts with FASLG. Interacts with EVL. Interacts with TMEM47. Interacts with LCK. In terms of processing, T-cell receptor ligation leads to increased tyrosine phosphorylation. As to expression, expressed in hematopoietic tissues such as myeloid and T-cells, spleen and thymus. Not expressed in B-cells, nor in non-lymphoid tissues.

The protein resides in the cytoplasm. It localises to the nucleus. Its subcellular location is the cell junction. Functionally, acts as an adapter protein of the FYN and LCP2 signaling cascades in T-cells. May play a role in linking T-cell signaling to remodeling of the actin cytoskeleton. Modulates the expression of IL2. Involved in platelet activation. Prevents the degradation of SKAP1 and SKAP2. May be involved in high affinity immunoglobulin epsilon receptor signaling in mast cells. This is FYN-binding protein 1 from Homo sapiens (Human).